The sequence spans 80 residues: UPF0291 protein EF_1580 (80 aa).

The segment at 60-80 (TDVTPEKLKKIQREKGLHNRK) is disordered. Residues 63-80 (TPEKLKKIQREKGLHNRK) are compositionally biased toward basic and acidic residues.

The protein belongs to the UPF0291 family.

The protein localises to the cytoplasm. The polypeptide is UPF0291 protein EF_1580 (Enterococcus faecalis (strain ATCC 700802 / V583)).